We begin with the raw amino-acid sequence, 588 residues long: Serine/threonine-protein phosphatase 2A 65 kDa regulatory subunit A alpha isoform (588 aa).

HEAT repeat units lie at residues 2–42 (AMVD…ALGE), 44–80 (RTRKELIPFLSENSDDDDEVLLAMAEELGVFIPFVGG), 81–119 (IEFAHVLLPPLESLCTVEETCVREKAVESLCKIGSQMKE), 158–196 (DVLKTELRATYSQLCKDDMPMVRRAAASNLGKFATTVES), 197–235 (TFLIAEIMTMFDDLTKDDQDSVRLLAVEGCAALGKLLEP), 236–274 (QDCVARILPVIVNFSQDKSWRVRYMVANQLYELCEAVGP), 275–313 (DCTRTDLVPAYVRLLRDNEAEVRIAAAGKVTKFCRLLNP), 315–352 (LAIQHILPCVKELSSDSSQHVRSALASVIMGMAPILGK), 353–391 (DSTIEHLLPIFLSLLKDEFPDVRLNIISKLDQVNQVIGI), 393–430 (LLSQSLLPAIVELAEDRHWRVRLAIIEYVPLLASQLGI), 432–469 (FFDDKLGALCMQWLQDKVYSIREAAANNLKRLAEEFGP), 470–508 (EWAMQHLVPQVLDMVNNPHYLHRMMVLRAISLMAPVMGS), 509–547 (EITCSKFLPVVVEASKDRVPNIKFNVAKLLQSLIPIVDQ), and 549–586 (VVDKTIRQCLVDLSEDPDVDVRYFANQALNSIDGSTAA).

It belongs to the phosphatase 2A regulatory subunit A family. PP2A consists of a common heterodimeric core enzyme, composed of a 36 kDa catalytic subunit (subunit C) and a 65 kDa constant regulatory subunit (subunit A), that associates with a variety of regulatory subunits such as subunits B (the R2/B/PR55/B55, R3/B''/PR72/PR130/PR59 and R5/B'/B56 families) and the regulatory subunits TON2. Interacts with CYP20-1/ROC7. Also interacts with phosphatidic acid (PA), a lipid signaling molecule. Interacts with CHIP. Interacts with SIC/RON3. In terms of processing, ubiquitinated. CHIP-mediated ubiquitination enhances phosphatase activity after an abiotic stress such as low temperature or darkness. In terms of tissue distribution, mostly expressed in cell-dividing tissues such as apical meristems. Ubiquitous, with higher levels in roots and flowers (at protein level).

Its subcellular location is the cytoplasm. The protein localises to the cytosol. It is found in the nucleus. The A subunit of protein phosphatase 2A serves as a scaffolding molecule to coordinate the assembly of the catalytic subunit and a variable regulatory B subunit. Seems to act as a positive regulator of PP2A catalytic activity. Confers resistance to phosphatase inhibitors such as okadaic acid and cantharidin. Involved during developmental process such as seedling and floral developments, root gravitropism, and stomatal opening regulation. Involved in the regulation of auxin efflux, especially during basipetal (tips to base) auxin transport in roots, and appears to contribute to the perception of auxin efflux inhibitors such as 1-N-naphthylphthalamic acid (NPA) and to semicarbazone I (substituted phenylsemicarbazone of 2-acetylarylcarboxylic acids) (SCB-I). Modulates the magnitude of ethylene response in the hypocotyl and stem, and functions as a general positive transducer of early ABA signaling. The holoenzyme composed of PP2AA1, PP2A4 and B'ZETA or B'ETA acts as a negative regulator of plant innate immunity by controlling BAK1 phosphorylation state and activation in surface-localized immune receptor complexes. This is Serine/threonine-protein phosphatase 2A 65 kDa regulatory subunit A alpha isoform (PP2AA1) from Arabidopsis thaliana (Mouse-ear cress).